Consider the following 343-residue polypeptide: Probable dolichyl-diphosphooligosaccharide--protein glycosyltransferase subunit 3A (343 aa).

An N-terminal signal peptide occupies residues 1-22 (MVIQTNLSYRFFILIVFLFTLA). Residues 23–185 (NPKSDSDLKN…TVCSIQRPPL (163 aa)) lie on the Lumenal side of the membrane. N-linked (GlcNAc...) asparagine glycans are attached at residues N105, N108, and N146. The helical transmembrane segment at 186 to 206 (ISKTQIGIIVAIIIISTPILI) threads the bilayer. Residues 207–220 (KKILKGETLLHDHR) are Cytoplasmic-facing. A helical membrane pass occupies residues 221 to 241 (IWLVGAVFVYFFSVSGTMHNI). Topologically, residues 242–273 (IREMPMYIKDYEDSSKFVFFIEESEMQLGAEG) are lumenal. The helical transmembrane segment at 274–294 (FFVGFLYTVVGLLLAFVTNVV) threads the bilayer. The Cytoplasmic portion of the chain corresponds to 295 to 304 (VRVKKLDEQR). Residues 305–325 (MAMLLALSISFWAVRKVVYLD) traverse the membrane as a helical segment. The Lumenal portion of the chain corresponds to 326 to 343 (NWKTGYEIYPYWPSSWRG).

It belongs to the OST3/OST6 family. As to quaternary structure, component of the oligosaccharyltransferase (OST) complex.

The protein localises to the endoplasmic reticulum membrane. Its function is as follows. Subunit of the oligosaccharyl transferase (OST) complex that catalyzes the initial transfer of a defined glycan (Glc(3)Man(9)GlcNAc(2) in eukaryotes) from the lipid carrier dolichol-pyrophosphate to an asparagine residue within an Asn-X-Ser/Thr consensus motif in nascent polypeptide chains, the first step in protein N-glycosylation. N-glycosylation occurs cotranslationally and the complex associates with the Sec61 complex at the channel-forming translocon complex that mediates protein translocation across the endoplasmic reticulum (ER). All subunits are required for a maximal enzyme activity. This is Probable dolichyl-diphosphooligosaccharide--protein glycosyltransferase subunit 3A (OST3A) from Arabidopsis thaliana (Mouse-ear cress).